The sequence spans 387 residues: S-adenosylmethionine synthase (387 aa).

Position 16 (His16) interacts with ATP. Mg(2+) is bound at residue Asp18. Residue Glu44 participates in K(+) binding. L-methionine-binding residues include Glu57 and Gln100. The interval 100–110 (QSPDIAQGVDR) is flexible loop. ATP is bound by residues 167 to 169 (DAK), 232 to 233 (RF), Asp241, 247 to 248 (RK), Ala264, and Lys268. Asp241 lines the L-methionine pocket. Residue Lys272 participates in L-methionine binding.

It belongs to the AdoMet synthase family. In terms of assembly, homotetramer; dimer of dimers. The cofactor is Mg(2+). Requires K(+) as cofactor.

The protein localises to the cytoplasm. It catalyses the reaction L-methionine + ATP + H2O = S-adenosyl-L-methionine + phosphate + diphosphate. The protein operates within amino-acid biosynthesis; S-adenosyl-L-methionine biosynthesis; S-adenosyl-L-methionine from L-methionine: step 1/1. Catalyzes the formation of S-adenosylmethionine (AdoMet) from methionine and ATP. The overall synthetic reaction is composed of two sequential steps, AdoMet formation and the subsequent tripolyphosphate hydrolysis which occurs prior to release of AdoMet from the enzyme. The polypeptide is S-adenosylmethionine synthase (Cupriavidus necator (strain ATCC 17699 / DSM 428 / KCTC 22496 / NCIMB 10442 / H16 / Stanier 337) (Ralstonia eutropha)).